We begin with the raw amino-acid sequence, 132 residues long: D-ribose pyranase (132 aa).

The active-site Proton donor is the H20. Substrate-binding positions include D28, H99, and 121–123; that span reads YSN.

Belongs to the RbsD / FucU family. RbsD subfamily. Homodecamer.

It is found in the cytoplasm. It catalyses the reaction beta-D-ribopyranose = beta-D-ribofuranose. Its pathway is carbohydrate metabolism; D-ribose degradation; D-ribose 5-phosphate from beta-D-ribopyranose: step 1/2. In terms of biological role, catalyzes the interconversion of beta-pyran and beta-furan forms of D-ribose. This chain is D-ribose pyranase, found in Streptococcus uberis (strain ATCC BAA-854 / 0140J).